The chain runs to 572 residues: Dihydroxy-acid dehydratase (572 aa).

Position 54 (Cys54) interacts with [2Fe-2S] cluster. Position 86 (Asp86) interacts with Mg(2+). A [2Fe-2S] cluster-binding site is contributed by Cys127. Residues Asp128 and Lys129 each contribute to the Mg(2+) site. The residue at position 129 (Lys129) is an N6-carboxylysine. Cys199 provides a ligand contact to [2Fe-2S] cluster. Residue Glu449 participates in Mg(2+) binding. The active-site Proton acceptor is the Ser475.

This sequence belongs to the IlvD/Edd family. Homodimer. Requires [2Fe-2S] cluster as cofactor. Mg(2+) is required as a cofactor.

The catalysed reaction is (2R)-2,3-dihydroxy-3-methylbutanoate = 3-methyl-2-oxobutanoate + H2O. The enzyme catalyses (2R,3R)-2,3-dihydroxy-3-methylpentanoate = (S)-3-methyl-2-oxopentanoate + H2O. Its pathway is amino-acid biosynthesis; L-isoleucine biosynthesis; L-isoleucine from 2-oxobutanoate: step 3/4. It functions in the pathway amino-acid biosynthesis; L-valine biosynthesis; L-valine from pyruvate: step 3/4. Functionally, functions in the biosynthesis of branched-chain amino acids. Catalyzes the dehydration of (2R,3R)-2,3-dihydroxy-3-methylpentanoate (2,3-dihydroxy-3-methylvalerate) into 2-oxo-3-methylpentanoate (2-oxo-3-methylvalerate) and of (2R)-2,3-dihydroxy-3-methylbutanoate (2,3-dihydroxyisovalerate) into 2-oxo-3-methylbutanoate (2-oxoisovalerate), the penultimate precursor to L-isoleucine and L-valine, respectively. The protein is Dihydroxy-acid dehydratase of Pelagibacter ubique (strain HTCC1062).